The chain runs to 241 residues: MHKLFVPYVMGNRDFIENVKTLSEAGADIVEVGVPFSDPVADGPVIMNVGNKAIQEGVNIQYIFDQLTENQDEIQSKYVLMTYYNIINHYGELAFLNACEQAGVYGLIIPDLPHELVQQLKARHPERKTNIISLIAMTTSNTRSHQIAKDAEGFIYTVTMNATTGEDGKFHPELKNRIKDIKAHTEVPVVAGFGIRTAAHVKDIIEASDGVVIGSEIVKRFENDDKQTTIEYLKTIRNVLN.

Residues Glu31 and Asp42 each act as proton acceptor in the active site.

This sequence belongs to the TrpA family. Tetramer of two alpha and two beta chains.

It catalyses the reaction (1S,2R)-1-C-(indol-3-yl)glycerol 3-phosphate + L-serine = D-glyceraldehyde 3-phosphate + L-tryptophan + H2O. Its pathway is amino-acid biosynthesis; L-tryptophan biosynthesis; L-tryptophan from chorismate: step 5/5. In terms of biological role, the alpha subunit is responsible for the aldol cleavage of indoleglycerol phosphate to indole and glyceraldehyde 3-phosphate. The polypeptide is Tryptophan synthase alpha chain (Staphylococcus saprophyticus subsp. saprophyticus (strain ATCC 15305 / DSM 20229 / NCIMB 8711 / NCTC 7292 / S-41)).